The primary structure comprises 807 residues: MPDLKSKTLSSQSLGAAIPPEIVYQILTYQFRDLLRNDHPGTAEKFNENLTTFVKSNLTVNKTFSHICQVLIYRYCNLTTAKRFHGLLQTLKGNRCLCNKIEVADFQELTSIGLGRSSEMNKMIKNLTNETLLEFLMLTKANLREFLACENIQDDLDDNIIKYILSPGKVLSVVDFCGCSGTTFTESFIKALDKYYPNKSIDQYRLEPIQQNYQITCLGLNDCIDLPSHVLWKILKMLPELQKLDLSHTSIDDSTLYHGIPHWKNLTHLSLATCLQVTPRAVLEFFSHHPTITDPDNTSTLEWLNVSVIAHSSSWNEVHTMFLLKKLCQHGHNKTLQYLNIGGLPLHVAPSFGEDPISESTYYYQCRDSLQFIKWNFPKLKSLSIKGNSIPISTLVEFLTPIDQDHPNCAQKLKFLNISGNSYVNKWTIQDSLLYTCSPSLVALEVSFDSWQQIEKLNDRHEIIAYRYKNPNSVIKDISTAEQVKWKCYIDSSYGRRYWLYKTDPFLNRDDLDSKSNLTRYDFEGHKIIEIINQPDFLKFAQSKIMLGCGLVPQSGIRRKLCYRDLKPPVSQFLNRKGAISLGDTPLPIITPTLPRGGWRIIHNEDDNNSHVEDSQNHVNAIPRRNSLLSRPTLRSNNGSSSANPFAINVSPASQIRDGLYWDRSVHDLRELSLQEQRIQELADEQQELRTIANFEETDDEYLHDPDLQRRRSQLHLFESSRSRSGNKTRPSLTGEHSSSASFLSFSHFNHLHKRKNYYFTHPDEFVYDPKDPLTTQRYRLHFEIVNEYQVFGCIERGMYRYYSLKA.

One can recognise an F-box domain in the interval 220–266 (LNDCIDLPSHVLWKILKMLPELQKLDLSHTSIDDSTLYHGIPHWKNL). The span at 607 to 616 (DNNSHVEDSQ) shows a compositional bias: basic and acidic residues. Disordered regions lie at residues 607–647 (DNNS…NPFA) and 716–739 (HLFE…EHSS). Polar residues-rich tracts occupy residues 627 to 644 (SLLS…SSAN) and 723 to 736 (SRSG…LTGE).

As to quaternary structure, interacts with SKP1 and CDC53. Component of the probable SCF(YBR352W) complex containing CDC53, SKP1, RBX1 and YBR352W.

It functions in the pathway protein modification; protein ubiquitination. Its function is as follows. Substrate recognition component of a SCF (SKP1-CUL1-F-box protein) E3 ubiquitin-protein ligase complex which mediates the ubiquitination and subsequent proteasomal degradation of target proteins. Probably recognizes and binds to phosphorylated target proteins. The chain is F-box protein YLR352W from Saccharomyces cerevisiae (strain ATCC 204508 / S288c) (Baker's yeast).